The primary structure comprises 313 residues: Ribonuclease HIII (313 aa).

The tract at residues 63–85 (ARWGTAEPQEKKKTAKKPADPRY) is disordered. Residues 70 to 82 (PQEKKKTAKKPAD) are compositionally biased toward basic and acidic residues. The region spanning 94-310 (MSVIGSDEVG…TQKAQRLADK (217 aa)) is the RNase H type-2 domain. Residues Asp100, Glu101, and Asp205 each coordinate a divalent metal cation.

This sequence belongs to the RNase HII family. RnhC subfamily. As to quaternary structure, interacts with the RNA polymerase core. Mn(2+) serves as cofactor. Requires Mg(2+) as cofactor.

Its subcellular location is the cytoplasm. The catalysed reaction is Endonucleolytic cleavage to 5'-phosphomonoester.. Endonuclease that specifically degrades the RNA of RNA-DNA hybrids. The sequence is that of Ribonuclease HIII (rnhC) from Bacillus subtilis (strain 168).